A 440-amino-acid polypeptide reads, in one-letter code: Adenylosuccinate synthetase 1, chloroplastic (440 aa).

Residues Gly13 to Lys19 and Gly41 to Thr43 each bind GTP. Asp14 serves as the catalytic Proton acceptor. 2 residues coordinate Mg(2+): Asp14 and Gly41. IMP contacts are provided by residues Asp14–Lys17, Asn39–His42, Thr135, Arg149, Gln230, Thr245, and Arg313. The active-site Proton donor is His42. Residue Thr309 to Arg315 coordinates substrate. GTP contacts are provided by residues Arg315 and Lys341 to Asp343.

The protein belongs to the adenylosuccinate synthetase family. In terms of assembly, homodimer. Mg(2+) is required as a cofactor.

It is found in the plastid. The protein resides in the chloroplast. The enzyme catalyses IMP + L-aspartate + GTP = N(6)-(1,2-dicarboxyethyl)-AMP + GDP + phosphate + 2 H(+). It participates in purine metabolism; AMP biosynthesis via de novo pathway; AMP from IMP: step 1/2. In terms of biological role, plays an important role in the de novo pathway and in the salvage pathway of purine nucleotide biosynthesis. Catalyzes the first committed step in the biosynthesis of AMP from IMP. The protein is Adenylosuccinate synthetase 1, chloroplastic of Ricinus communis (Castor bean).